The sequence spans 189 residues: Pyridoxal 5'-phosphate synthase subunit PdxT (189 aa).

Position 46-48 (46-48 (GES)) interacts with L-glutamine. The active-site Nucleophile is Cys-78. L-glutamine is bound by residues Arg-107 and 136-137 (IR). Catalysis depends on charge relay system residues His-173 and Glu-175.

The protein belongs to the glutaminase PdxT/SNO family. As to quaternary structure, in the presence of PdxS, forms a dodecamer of heterodimers. Only shows activity in the heterodimer.

The catalysed reaction is aldehydo-D-ribose 5-phosphate + D-glyceraldehyde 3-phosphate + L-glutamine = pyridoxal 5'-phosphate + L-glutamate + phosphate + 3 H2O + H(+). It carries out the reaction L-glutamine + H2O = L-glutamate + NH4(+). It functions in the pathway cofactor biosynthesis; pyridoxal 5'-phosphate biosynthesis. Functionally, catalyzes the hydrolysis of glutamine to glutamate and ammonia as part of the biosynthesis of pyridoxal 5'-phosphate. The resulting ammonia molecule is channeled to the active site of PdxS. The chain is Pyridoxal 5'-phosphate synthase subunit PdxT from Roseiflexus sp. (strain RS-1).